The chain runs to 319 residues: Probable NAD(P)H-dependent D-xylose reductase xyl1 (319 aa).

Y50 serves as the catalytic Proton donor. H112 lines the substrate pocket. NAD(+)-binding positions include S166–N167, S215–E224, and K271–N281.

The protein belongs to the aldo/keto reductase family.

The catalysed reaction is xylitol + NAD(+) = D-xylose + NADH + H(+). The enzyme catalyses xylitol + NADP(+) = D-xylose + NADPH + H(+). It functions in the pathway carbohydrate metabolism; D-xylose degradation. Catalyzes the initial reaction in the xylose utilization pathway by reducing D-xylose into xylitol. Xylose is a major component of hemicelluloses such as xylan. Most fungi utilize D-xylose via three enzymatic reactions, xylose reductase (XR), xylitol dehydrogenase (XDH), and xylulokinase, to form xylulose 5-phosphate, which enters pentose phosphate pathway. The protein is Probable NAD(P)H-dependent D-xylose reductase xyl1 (xyl1) of Emericella nidulans (strain FGSC A4 / ATCC 38163 / CBS 112.46 / NRRL 194 / M139) (Aspergillus nidulans).